The chain runs to 30 residues: MLHLIGFDKLYSYNMVKLALLEKGVPFTEV.

This sequence belongs to the GST superfamily. Monomer and homodimer.

The protein localises to the cytoplasm. The enzyme catalyses RX + glutathione = an S-substituted glutathione + a halide anion + H(+). In terms of biological role, conjugation of reduced glutathione to a wide number of exogenous and endogenous hydrophobic electrophiles. The chain is Glutathione S-transferase from Pseudomonas fluorescens.